Reading from the N-terminus, the 452-residue chain is Envelope glycoprotein D (452 aa).

The signal sequence occupies residues 1 to 19; the sequence is MPAVLLVLYVNPPPSVCIL. Topologically, residues 20-405 are virion surface; that stretch reads TQKLSLGLYN…NSTFVGISVG (386 aa). Asn-103 and Asn-111 each carry an N-linked (GlcNAc...) asparagine; by host glycan. Disulfide bonds link Cys-138/Cys-259, Cys-176/Cys-273, and Cys-188/Cys-197. Residues 331 to 365 form a disordered region; it reads PDNHPGFDSVESEITQNKTDPKPGQADPKPNQPFK. 2 N-linked (GlcNAc...) asparagine; by host glycosylation sites follow: Asn-347 and Asn-396. The helical transmembrane segment at 406–422 threads the bilayer; that stretch reads LGIAGLVLVGVILYVCL. Residues 423-452 are Intravirion-facing; that stretch reads RRKKELKKSAQNGLTRLRSTFKDVKYTQLP.

It belongs to the herpesviridae glycoprotein D family.

Its subcellular location is the virion membrane. Functionally, envelope glycoprotein that binds to host cell entry receptors, promoting the virus entry into host cells. May trigger fusion with host membrane, by recruiting the fusion machinery composed of gB and gH/gL. The protein is Envelope glycoprotein D (gD) of Equine herpesvirus 1 (strain Ab4p) (EHV-1).